The following is a 149-amino-acid chain: 6,7-dimethyl-8-ribityllumazine synthase (149 aa).

5-amino-6-(D-ribitylamino)uracil-binding positions include F22, 56–58 (ALE), and 80–82 (AVI). 85–86 (ET) serves as a coordination point for (2S)-2-hydroxy-3-oxobutyl phosphate. H88 (proton donor) is an active-site residue. N113 contributes to the 5-amino-6-(D-ribitylamino)uracil binding site. Residue R127 coordinates (2S)-2-hydroxy-3-oxobutyl phosphate.

Belongs to the DMRL synthase family.

The enzyme catalyses (2S)-2-hydroxy-3-oxobutyl phosphate + 5-amino-6-(D-ribitylamino)uracil = 6,7-dimethyl-8-(1-D-ribityl)lumazine + phosphate + 2 H2O + H(+). Its pathway is cofactor biosynthesis; riboflavin biosynthesis; riboflavin from 2-hydroxy-3-oxobutyl phosphate and 5-amino-6-(D-ribitylamino)uracil: step 1/2. Its function is as follows. Catalyzes the formation of 6,7-dimethyl-8-ribityllumazine by condensation of 5-amino-6-(D-ribitylamino)uracil with 3,4-dihydroxy-2-butanone 4-phosphate. This is the penultimate step in the biosynthesis of riboflavin. The protein is 6,7-dimethyl-8-ribityllumazine synthase of Methylobacillus flagellatus (strain ATCC 51484 / DSM 6875 / VKM B-1610 / KT).